The primary structure comprises 333 residues: Fructose-1,6-bisphosphatase class 1 (333 aa).

Positions 92, 113, 115, and 116 each coordinate Mg(2+). Residues 116–119 (DGSS), N209, Y242, and K272 each bind substrate. E278 contributes to the Mg(2+) binding site.

This sequence belongs to the FBPase class 1 family. In terms of assembly, homotetramer. The cofactor is Mg(2+).

It is found in the cytoplasm. The catalysed reaction is beta-D-fructose 1,6-bisphosphate + H2O = beta-D-fructose 6-phosphate + phosphate. Its pathway is carbohydrate biosynthesis; Calvin cycle. This Chlorobium luteolum (strain DSM 273 / BCRC 81028 / 2530) (Pelodictyon luteolum) protein is Fructose-1,6-bisphosphatase class 1.